Reading from the N-terminus, the 423-residue chain is Lysosomal acid phosphatase (423 aa).

An N-terminal signal peptide occupies residues 1–30 (MAGKRSGWSRAALLQLLLGVNLVVMPPTRA). The Lumenal segment spans residues 31–380 (RSLRFVTLLY…QLASGPADTE (350 aa)). The Nucleophile role is filled by His-42. 6 N-linked (GlcNAc...) asparagine glycosylation sites follow: Asn-92, Asn-133, Asn-167, Asn-177, Asn-191, and Asn-267. 3 disulfide bridges follow: Cys-159/Cys-370, Cys-212/Cys-310, and Cys-345/Cys-349. Asp-287 acts as the Proton donor in catalysis. Asn-322 and Asn-331 each carry an N-linked (GlcNAc...) asparagine glycan. Residues 381-401 (VIVALAVCGSILFLLIVLLLT) form a helical membrane-spanning segment. Over 402 to 423 (VLFRMQAQPPGYRHVADGEDHA) the chain is Cytoplasmic.

The protein belongs to the histidine acid phosphatase family. The membrane-bound form is converted to the soluble form by sequential proteolytic processing. First, the C-terminal cytoplasmic tail is removed. Cleavage by a lysosomal protease releases the soluble form in the lysosome lumen. In terms of processing, N-glycosylated. The intermediates formed during enzymatic deglycosylation suggest that all eight predicted N-glycosylation sites are used.

The protein localises to the lysosome membrane. The protein resides in the lysosome lumen. The enzyme catalyses a phosphate monoester + H2O = an alcohol + phosphate. In Homo sapiens (Human), this protein is Lysosomal acid phosphatase (ACP2).